Reading from the N-terminus, the 631-residue chain is MKISWKNILLTLIPLGLISFLVWQGFNNTTNPQFTKNIASSRMTYGRFLEYLDLGWVKKVDLYDEGHTAIVEAIGPELGNRIQRIRVELPATAPELITKLRKANVDLDAHATNDSTPAWSLIGNLIFPILLIAGLAFLFRRSSNLPGGPGQAMNFGKSKARFQMEAKTGVTFNDVAGVDEAKEEFEEVVSFLKKPERFTAVGAKIPKGVLLVGPPGTGKTLLAKAIAGEAGVPFFSISGSEFVEMFVGVGASRVRDLFKKAKENSPCIVFIDEIDAVGRQRGTGIGGGNDEREQTLNQLLTEMDGFEGNTGIIIIAATNRVDVLDAALLRPGRFDRQVTVDVPDVKGRLEILNVHARNKKLDLSISLELIAKRTPGFSGADLANLLNEAAILTARRRKKQITISEIDASIDRVIAGMEGKALVDSKTKRLIAYHEVGHAIIGTLLKHHDPVQKVTLVPRGQAKGLTWFTPSEDQSLISRSQILARIMGALGGRAAEEVVFGLPEVTTGAGNDLQQVTSMARQMVTRFGMSNIGPLSLESQNSDPFLGRTMGSSSQYSEDIASRIDMQVRAIIQHCHTETVQIIKDNRVVIDKLVDLLIEKETIDGDEFRQIVGDFTSLPEKIDYKSQLKST.

The Stromal segment spans residues 1–2 (MK). The chain crosses the membrane as a helical span at residues 3-23 (ISWKNILLTLIPLGLISFLVW). At 24–118 (QGFNNTTNPQ…AHATNDSTPA (95 aa)) the chain is on the lumenal side. Residues 119 to 139 (WSLIGNLIFPILLIAGLAFLF) form a helical membrane-spanning segment. Topologically, residues 140–631 (RRSSNLPGGP…IDYKSQLKST (492 aa)) are stromal. 213-220 (GPPGTGKT) serves as a coordination point for ATP. A Zn(2+)-binding site is contributed by His434. Glu435 is an active-site residue. Zn(2+) is bound by residues His438 and Asp512.

It in the central section; belongs to the AAA ATPase family. The protein in the C-terminal section; belongs to the peptidase M41 family. Homohexamer. The cofactor is Zn(2+).

The protein localises to the plastid. It localises to the chloroplast thylakoid membrane. Its function is as follows. Acts as a processive, ATP-dependent zinc metallopeptidase. The protein is ATP-dependent zinc metalloprotease FtsH of Guillardia theta (Cryptophyte).